We begin with the raw amino-acid sequence, 167 residues long: NAD(P)H-quinone oxidoreductase subunit I, chloroplastic (167 aa).

4Fe-4S ferredoxin-type domains are found at residues 55–84 (GRIH…VDWK) and 95–124 (LNYS…MTEE). [4Fe-4S] cluster-binding residues include C64, C67, C70, C74, C104, C107, C110, and C114.

It belongs to the complex I 23 kDa subunit family. NDH is composed of at least 16 different subunits, 5 of which are encoded in the nucleus. It depends on [4Fe-4S] cluster as a cofactor.

It localises to the plastid. It is found in the chloroplast thylakoid membrane. It catalyses the reaction a plastoquinone + NADH + (n+1) H(+)(in) = a plastoquinol + NAD(+) + n H(+)(out). The catalysed reaction is a plastoquinone + NADPH + (n+1) H(+)(in) = a plastoquinol + NADP(+) + n H(+)(out). Functionally, NDH shuttles electrons from NAD(P)H:plastoquinone, via FMN and iron-sulfur (Fe-S) centers, to quinones in the photosynthetic chain and possibly in a chloroplast respiratory chain. The immediate electron acceptor for the enzyme in this species is believed to be plastoquinone. Couples the redox reaction to proton translocation, and thus conserves the redox energy in a proton gradient. The sequence is that of NAD(P)H-quinone oxidoreductase subunit I, chloroplastic from Vitis vinifera (Grape).